The sequence spans 137 residues: Small ribosomal subunit protein uS9 (137 aa).

The interval Asp-114–Arg-137 is disordered. Residues Lys-118–Arg-137 are compositionally biased toward basic residues.

This sequence belongs to the universal ribosomal protein uS9 family.

In Rhodopirellula baltica (strain DSM 10527 / NCIMB 13988 / SH1), this protein is Small ribosomal subunit protein uS9.